The chain runs to 210 residues: Probable GTP-binding protein EngB (210 aa).

One can recognise an EngB-type G domain in the interval 25–199 (TGIEVAFAGR…RQKLDTWFSE (175 aa)). GTP contacts are provided by residues 33–40 (GRSNAGKS), 60–64 (GRTQL), 78–81 (DLPG), 145–148 (TKAD), and 178–180 (FSS). The Mg(2+) site is built by Ser40 and Thr62.

Belongs to the TRAFAC class TrmE-Era-EngA-EngB-Septin-like GTPase superfamily. EngB GTPase family. The cofactor is Mg(2+).

Necessary for normal cell division and for the maintenance of normal septation. In Shigella flexneri, this protein is Probable GTP-binding protein EngB.